The sequence spans 261 residues: tRNA pseudouridine synthase A (261 aa).

Aspartate 51 functions as the Nucleophile in the catalytic mechanism. Tyrosine 109 lines the substrate pocket.

Belongs to the tRNA pseudouridine synthase TruA family. Homodimer.

The catalysed reaction is uridine(38/39/40) in tRNA = pseudouridine(38/39/40) in tRNA. Formation of pseudouridine at positions 38, 39 and 40 in the anticodon stem and loop of transfer RNAs. The polypeptide is tRNA pseudouridine synthase A (Shewanella sp. (strain MR-7)).